Here is a 139-residue protein sequence, read N- to C-terminus: Phosphoribosyl-AMP cyclohydrolase (139 aa).

Position 91 (Asp91) interacts with Mg(2+). Residue Cys92 participates in Zn(2+) binding. Positions 93 and 95 each coordinate Mg(2+). Positions 110 and 117 each coordinate Zn(2+).

Belongs to the PRA-CH family. In terms of assembly, homodimer. Mg(2+) serves as cofactor. The cofactor is Zn(2+).

It localises to the cytoplasm. The catalysed reaction is 1-(5-phospho-beta-D-ribosyl)-5'-AMP + H2O = 1-(5-phospho-beta-D-ribosyl)-5-[(5-phospho-beta-D-ribosylamino)methylideneamino]imidazole-4-carboxamide. The protein operates within amino-acid biosynthesis; L-histidine biosynthesis; L-histidine from 5-phospho-alpha-D-ribose 1-diphosphate: step 3/9. Catalyzes the hydrolysis of the adenine ring of phosphoribosyl-AMP. In Brucella abortus (strain S19), this protein is Phosphoribosyl-AMP cyclohydrolase.